Here is a 341-residue protein sequence, read N- to C-terminus: NADH-quinone oxidoreductase subunit H 1 (341 aa).

8 consecutive transmembrane segments (helical) span residues 13 to 33, 82 to 102, 115 to 135, 161 to 181, 190 to 210, 248 to 268, 277 to 297, and 313 to 333; these read LVVI…IAYI, GLFL…WAVI, VGVL…IMAG, IGFV…TAIV, MLGW…VSAL, YVAI…GWLP, WVPG…LFAM, and LGWK…ASVL.

The protein belongs to the complex I subunit 1 family. As to quaternary structure, NDH-1 is composed of 14 different subunits. Subunits NuoA, H, J, K, L, M, N constitute the membrane sector of the complex.

Its subcellular location is the cell inner membrane. The enzyme catalyses a quinone + NADH + 5 H(+)(in) = a quinol + NAD(+) + 4 H(+)(out). Functionally, NDH-1 shuttles electrons from NADH, via FMN and iron-sulfur (Fe-S) centers, to quinones in the respiratory chain. The immediate electron acceptor for the enzyme in this species is believed to be ubiquinone. Couples the redox reaction to proton translocation (for every two electrons transferred, four hydrogen ions are translocated across the cytoplasmic membrane), and thus conserves the redox energy in a proton gradient. This subunit may bind ubiquinone. This Rhodopseudomonas palustris (strain ATCC BAA-98 / CGA009) protein is NADH-quinone oxidoreductase subunit H 1.